We begin with the raw amino-acid sequence, 345 residues long: MGNLKGVRIAGTGSYVPERIVTNEDLAALGCDSDWIVRRTGILQRRHAEPGQATSDLCYEAALRCLENANVSVDEIDLILVATITPDHPTPSTACHLQRRLGAVAPAMDIGAACAGFMYALVTGAQFVSNGNARNVLVIGADLMSRTVDPEDKKTYPLFGDAAGAALLVPSTQDECQSTECNGSAADSTIQTDGLLAYQLGSEGCGGEMLCIPAGGSRTPITTDGEDSASRYLQMDGRGVFKWAVRVFDESAKDVLRAANVSSDQLSLVVLHQANQRIIDSAVSDLNVPPEKVFVNLDKYGNTSGASIPLALDEAARAGRLKEGDLVLLCGFGAGLAWGTALFRW.

Active-site residues include Cys114 and His272. The interval 273–277 (QANQR) is ACP-binding. The active site involves Asn302.

The protein belongs to the thiolase-like superfamily. FabH family. Homodimer.

The protein resides in the cytoplasm. The catalysed reaction is malonyl-[ACP] + acetyl-CoA + H(+) = 3-oxobutanoyl-[ACP] + CO2 + CoA. It participates in lipid metabolism; fatty acid biosynthesis. In terms of biological role, catalyzes the condensation reaction of fatty acid synthesis by the addition to an acyl acceptor of two carbons from malonyl-ACP. Catalyzes the first condensation reaction which initiates fatty acid synthesis and may therefore play a role in governing the total rate of fatty acid production. Possesses both acetoacetyl-ACP synthase and acetyl transacylase activities. Its substrate specificity determines the biosynthesis of branched-chain and/or straight-chain of fatty acids. The polypeptide is Beta-ketoacyl-[acyl-carrier-protein] synthase III (Rhodopirellula baltica (strain DSM 10527 / NCIMB 13988 / SH1)).